A 419-amino-acid polypeptide reads, in one-letter code: Serine--tRNA ligase (419 aa).

226-228 (TSE) lines the L-serine pocket. ATP-binding positions include 257 to 259 (RRE) and valine 273. Glutamate 280 contacts L-serine. 344 to 347 (ELTS) contributes to the ATP binding site. Threonine 379 lines the L-serine pocket.

Belongs to the class-II aminoacyl-tRNA synthetase family. Type-1 seryl-tRNA synthetase subfamily. As to quaternary structure, homodimer. The tRNA molecule binds across the dimer.

It is found in the cytoplasm. The enzyme catalyses tRNA(Ser) + L-serine + ATP = L-seryl-tRNA(Ser) + AMP + diphosphate + H(+). It catalyses the reaction tRNA(Sec) + L-serine + ATP = L-seryl-tRNA(Sec) + AMP + diphosphate + H(+). It participates in aminoacyl-tRNA biosynthesis; selenocysteinyl-tRNA(Sec) biosynthesis; L-seryl-tRNA(Sec) from L-serine and tRNA(Sec): step 1/1. Functionally, catalyzes the attachment of serine to tRNA(Ser). Is also able to aminoacylate tRNA(Sec) with serine, to form the misacylated tRNA L-seryl-tRNA(Sec), which will be further converted into selenocysteinyl-tRNA(Sec). The protein is Serine--tRNA ligase of Mycolicibacterium vanbaalenii (strain DSM 7251 / JCM 13017 / BCRC 16820 / KCTC 9966 / NRRL B-24157 / PYR-1) (Mycobacterium vanbaalenii).